Consider the following 1378-residue polypeptide: DNA-directed RNA polymerase subunit beta (1378 aa).

It belongs to the RNA polymerase beta chain family. In terms of assembly, the RNAP catalytic core consists of 2 alpha, 1 beta, 1 beta' and 1 omega subunit. When a sigma factor is associated with the core the holoenzyme is formed, which can initiate transcription.

It carries out the reaction RNA(n) + a ribonucleoside 5'-triphosphate = RNA(n+1) + diphosphate. Functionally, DNA-dependent RNA polymerase catalyzes the transcription of DNA into RNA using the four ribonucleoside triphosphates as substrates. The protein is DNA-directed RNA polymerase subunit beta of Campylobacter jejuni subsp. jejuni serotype O:23/36 (strain 81-176).